Here is a 650-residue protein sequence, read N- to C-terminus: DNA-directed RNA polymerase III subunit rpc3 (650 aa).

Disordered stretches follow at residues Pro133 to Thr163, Arg264 to Arg283, Ala288 to Met313, and Leu400 to Gly440. Residues Gly149 to Glu158 are compositionally biased toward acidic residues. The segment covering Ala288–Gly307 has biased composition (acidic residues). Residues Thr577 to Phe598 are leucine-zipper.

It belongs to the RNA polymerase beta chain family. In terms of assembly, component of the RNA polymerase III (Pol III) complex consisting of 17 subunits.

It is found in the nucleus. In terms of biological role, DNA-dependent RNA polymerase catalyzes the transcription of DNA into RNA using the four ribonucleoside triphosphates as substrates. Specific core component of RNA polymerase III which synthesizes small RNAs, such as 5S rRNA and tRNAs. In Aspergillus terreus (strain NIH 2624 / FGSC A1156), this protein is DNA-directed RNA polymerase III subunit rpc3 (rpc82).